The chain runs to 238 residues: CD63 antigen (238 aa).

The Cytoplasmic segment spans residues Met-1–Lys-11. Residues Phe-12–Gly-32 form a helical membrane-spanning segment. Over Val-33–Ser-51 the chain is Extracellular. Residues Leu-52–Cys-72 traverse the membrane as a helical segment. Over Cys-73–Cys-81 the chain is Cytoplasmic. The chain crosses the membrane as a helical span at residues Leu-82–Ile-102. Topologically, residues Ala-103 to Val-203 are extracellular. Asn-125, Asn-130, Asn-150, and Asn-172 each carry an N-linked (GlcNAc...) asparagine glycan. A helical transmembrane segment spans residues Leu-204 to Ala-224. The Cytoplasmic segment spans residues Cys-225–Met-238. Residues Gly-234–Met-238 carry the Lysosomal targeting motif motif.

The protein belongs to the tetraspanin (TM4SF) family. As to quaternary structure, interacts with TIMP1 and ITGB1 and recruits TIMP1 to ITGB1. Interacts with CD9. Identified in a complex with CD9 and ITGB3. Interacts with PMEL. Interacts with KDR/VEGFR2; identified in a complex with ITGB1 and KDR/VEGFR2 and is required to recruit KDR to ITGB1 complexes. Interacts with SYT7. Post-translationally, palmitoylated at a low, basal level in unstimulated platelets. The level of palmitoylation increases when platelets are activated by thrombin (in vitro).

It is found in the cell membrane. The protein resides in the lysosome membrane. It localises to the late endosome membrane. Its subcellular location is the endosome. The protein localises to the multivesicular body. It is found in the melanosome. The protein resides in the secreted. It localises to the extracellular exosome. Its subcellular location is the cell surface. Its function is as follows. Functions as a cell surface receptor for TIMP1 and plays a role in the activation of cellular signaling cascades. Plays a role in the activation of ITGB1 and integrin signaling, leading to the activation of AKT, FAK/PTK2 and MAP kinases. Promotes cell survival, reorganization of the actin cytoskeleton, cell adhesion, spreading and migration, via its role in the activation of AKT and FAK/PTK2. Plays a role in VEGFA signaling via its role in regulating the internalization of KDR/VEGFR2. Plays a role in intracellular vesicular transport processes, and is required for normal trafficking of the PMEL luminal domain that is essential for the development and maturation of melanocytes. Plays a role in the adhesion of leukocytes onto endothelial cells via its role in the regulation of SELP trafficking. May play a role in mast cell degranulation in response to Ms4a2/FceRI stimulation, but not in mast cell degranulation in response to other stimuli. This chain is CD63 antigen (CD63), found in Oryctolagus cuniculus (Rabbit).